A 274-amino-acid chain; its full sequence is 2-dehydro-3-deoxyphosphooctonate aldolase (274 aa).

The protein belongs to the KdsA family.

The protein localises to the cytoplasm. The enzyme catalyses D-arabinose 5-phosphate + phosphoenolpyruvate + H2O = 3-deoxy-alpha-D-manno-2-octulosonate-8-phosphate + phosphate. Its pathway is carbohydrate biosynthesis; 3-deoxy-D-manno-octulosonate biosynthesis; 3-deoxy-D-manno-octulosonate from D-ribulose 5-phosphate: step 2/3. It functions in the pathway bacterial outer membrane biogenesis; lipopolysaccharide biosynthesis. The polypeptide is 2-dehydro-3-deoxyphosphooctonate aldolase (Rickettsia rickettsii (strain Iowa)).